Reading from the N-terminus, the 372-residue chain is Glutamate 5-kinase (372 aa).

An ATP-binding site is contributed by K9. Substrate-binding residues include S49, D136, and N148. ATP is bound by residues 168–169 (TD) and 210–216 (TGGMKSK). The 85-residue stretch at 276 to 360 (EGKVFIDDGA…PAIEVIHRDS (85 aa)) folds into the PUA domain.

This sequence belongs to the glutamate 5-kinase family.

It is found in the cytoplasm. The enzyme catalyses L-glutamate + ATP = L-glutamyl 5-phosphate + ADP. The protein operates within amino-acid biosynthesis; L-proline biosynthesis; L-glutamate 5-semialdehyde from L-glutamate: step 1/2. Catalyzes the transfer of a phosphate group to glutamate to form L-glutamate 5-phosphate. The protein is Glutamate 5-kinase of Oceanobacillus iheyensis (strain DSM 14371 / CIP 107618 / JCM 11309 / KCTC 3954 / HTE831).